A 666-amino-acid chain; its full sequence is uncharacterized protein (666 aa).

It belongs to the MG032/MG096/MG288 family.

This is an uncharacterized protein from Mycoplasma pneumoniae (strain ATCC 29342 / M129 / Subtype 1) (Mycoplasmoides pneumoniae).